A 122-amino-acid polypeptide reads, in one-letter code: Protein POLR1D, isoform 2 (122 aa).

M1 is modified (N-acetylmethionine). The tract at residues I48–R122 is disordered. Residues S57–P83 are compositionally biased toward basic and acidic residues. The span at K84–R96 shows a compositional bias: basic residues. Phosphoserine is present on S104. Basic and acidic residues predominate over residues S110 to R122.

The polypeptide is Protein POLR1D, isoform 2 (POLR1D) (Homo sapiens (Human)).